The following is a 295-amino-acid chain: Glutamyl-Q tRNA(Asp) synthetase (295 aa).

L-glutamate contacts are provided by residues 9 to 13 (RFAPT) and Glu-45. Residues 12-22 (PTPSGYLHFGS) carry the 'HIGH' region motif. Zn(2+)-binding residues include Cys-101, Cys-103, Tyr-115, and Cys-119. Residues Tyr-172 and Arg-190 each coordinate L-glutamate. The 'KMSKS' region signature appears at 228–232 (KLGKS). Lys-231 is an ATP binding site.

Belongs to the class-I aminoacyl-tRNA synthetase family. GluQ subfamily. It depends on Zn(2+) as a cofactor.

In terms of biological role, catalyzes the tRNA-independent activation of glutamate in presence of ATP and the subsequent transfer of glutamate onto a tRNA(Asp). Glutamate is transferred on the 2-amino-5-(4,5-dihydroxy-2-cyclopenten-1-yl) moiety of the queuosine in the wobble position of the QUC anticodon. This Pseudomonas syringae pv. tomato (strain ATCC BAA-871 / DC3000) protein is Glutamyl-Q tRNA(Asp) synthetase.